Consider the following 101-residue polypeptide: CRISPR-associated endoribonuclease Cas2 (101 aa).

A Mg(2+)-binding site is contributed by D8.

The protein belongs to the CRISPR-associated endoribonuclease Cas2 protein family. As to quaternary structure, homodimer, forms a heterotetramer with a Cas1 homodimer. Mg(2+) is required as a cofactor.

CRISPR (clustered regularly interspaced short palindromic repeat), is an adaptive immune system that provides protection against mobile genetic elements (viruses, transposable elements and conjugative plasmids). CRISPR clusters contain sequences complementary to antecedent mobile elements and target invading nucleic acids. CRISPR clusters are transcribed and processed into CRISPR RNA (crRNA). Functions as a ssRNA-specific endoribonuclease. Involved in the integration of spacer DNA into the CRISPR cassette. The protein is CRISPR-associated endoribonuclease Cas2 of Parvibaculum lavamentivorans (strain DS-1 / DSM 13023 / NCIMB 13966).